The sequence spans 213 residues: Nicotinate-nucleotide adenylyltransferase (213 aa).

The protein belongs to the NadD family.

The catalysed reaction is nicotinate beta-D-ribonucleotide + ATP + H(+) = deamido-NAD(+) + diphosphate. It participates in cofactor biosynthesis; NAD(+) biosynthesis; deamido-NAD(+) from nicotinate D-ribonucleotide: step 1/1. Catalyzes the reversible adenylation of nicotinate mononucleotide (NaMN) to nicotinic acid adenine dinucleotide (NaAD). The sequence is that of Nicotinate-nucleotide adenylyltransferase from Salmonella typhimurium (strain LT2 / SGSC1412 / ATCC 700720).